The primary structure comprises 505 residues: Probable malate:quinone oxidoreductase (505 aa).

It belongs to the MQO family. FAD serves as cofactor.

It carries out the reaction (S)-malate + a quinone = a quinol + oxaloacetate. It participates in carbohydrate metabolism; tricarboxylic acid cycle; oxaloacetate from (S)-malate (quinone route): step 1/1. This chain is Probable malate:quinone oxidoreductase, found in Pseudomonas fluorescens.